Consider the following 163-residue polypeptide: 3-isopropylmalate dehydratase small subunit (163 aa).

Belongs to the LeuD family. LeuD type 2 subfamily. Heterodimer of LeuC and LeuD.

It carries out the reaction (2R,3S)-3-isopropylmalate = (2S)-2-isopropylmalate. The protein operates within amino-acid biosynthesis; L-leucine biosynthesis; L-leucine from 3-methyl-2-oxobutanoate: step 2/4. Its function is as follows. Catalyzes the isomerization between 2-isopropylmalate and 3-isopropylmalate, via the formation of 2-isopropylmaleate. The polypeptide is 3-isopropylmalate dehydratase small subunit (Endomicrobium trichonymphae).